We begin with the raw amino-acid sequence, 233 residues long: Biosynthetic peptidoglycan transglycosylase (233 aa).

Residues 8 to 28 traverse the membrane as a helical segment; sequence LIALPVGIFIFFNAYVYGNII.

This sequence belongs to the glycosyltransferase 51 family.

The protein resides in the cell inner membrane. The catalysed reaction is [GlcNAc-(1-&gt;4)-Mur2Ac(oyl-L-Ala-gamma-D-Glu-L-Lys-D-Ala-D-Ala)](n)-di-trans,octa-cis-undecaprenyl diphosphate + beta-D-GlcNAc-(1-&gt;4)-Mur2Ac(oyl-L-Ala-gamma-D-Glu-L-Lys-D-Ala-D-Ala)-di-trans,octa-cis-undecaprenyl diphosphate = [GlcNAc-(1-&gt;4)-Mur2Ac(oyl-L-Ala-gamma-D-Glu-L-Lys-D-Ala-D-Ala)](n+1)-di-trans,octa-cis-undecaprenyl diphosphate + di-trans,octa-cis-undecaprenyl diphosphate + H(+). Its pathway is cell wall biogenesis; peptidoglycan biosynthesis. In terms of biological role, peptidoglycan polymerase that catalyzes glycan chain elongation from lipid-linked precursors. The polypeptide is Biosynthetic peptidoglycan transglycosylase (Neisseria meningitidis serogroup B (strain ATCC BAA-335 / MC58)).